A 490-amino-acid chain; its full sequence is Beta-glucosidase 42 (490 aa).

Residues Q35, H137, 182–183 (NE), Y317, and E388 contribute to the a beta-D-glucoside site. Catalysis depends on E183, which acts as the Proton donor. Catalysis depends on E388, which acts as the Nucleophile. N-linked (GlcNAc...) asparagine glycosylation occurs at N420. Residues W437, 444 to 445 (EW), and F453 each bind a beta-D-glucoside.

This sequence belongs to the glycosyl hydrolase 1 family. Expressed at low levels predominantly in root epidermal cells.

The enzyme catalyses Hydrolysis of terminal, non-reducing beta-D-glucosyl residues with release of beta-D-glucose.. Its function is as follows. Glucosidase that hydrolyzes scopolin and various beta-glucosides, cellooligosaccharides (mainly cellotriose) and laminarioligosaccharides. Can use p-nitrophenyl-beta-glucosides (pNP beta-Glc) and p-nitrophenyl-beta-D-fucosides (pNP beta-D-Fuc) as substrates, and, to a lower extent, beta-galactosides, beta-mannosides and beta-xylosides. Involved in the secretion of root-derived phenolics upon iron ions (Fe) depletion. Promotes disease resistance toward B.cinerea, H.arabidopsidis and P.syringae pv. tomato DC3000. Required during rhizobacteria-mediated (e.g. P.fluorescens WCS417r) broad-spectrum induced systemic resistance (ISR) against several pathogens. The sequence is that of Beta-glucosidase 42 from Arabidopsis thaliana (Mouse-ear cress).